The chain runs to 96 residues: Growth-regulated alpha protein (96 aa).

Residues 1–24 (MVSATRSLLCAALPVLATSRQATG) form the signal peptide. Disulfide bonds link Cys33-Cys59 and Cys35-Cys75.

The protein belongs to the intercrine alpha (chemokine CxC) family. Monomer and homodimer. In terms of tissue distribution, at least expressed in the lung and trachea.

The protein localises to the secreted. In terms of biological role, has chemotactic activity for neutrophils. Contributes to neutrophil activation during inflammation. The protein is Growth-regulated alpha protein (Cxcl1) of Rattus norvegicus (Rat).